We begin with the raw amino-acid sequence, 40 residues long: Cytochrome c3 hydrogenase small chain (40 aa).

The cofactor is Fe cation.

It catalyses the reaction 2 Fe(III)-[cytochrome c3] + H2 = 2 Fe(II)-[cytochrome c3] + 2 H(+). The protein is Cytochrome c3 hydrogenase small chain (hoxK) of Acidithiobacillus ferrooxidans (Thiobacillus ferrooxidans).